A 382-amino-acid polypeptide reads, in one-letter code: Intermediate transcription factor 3 large subunit (382 aa).

This sequence belongs to the poxviruses A23 family. Heterodimer of a 45 kDa and a 32 kDa subunit.

In terms of biological role, acts with RNA polymerase to initiate transcription from intermediate gene promoters. The polypeptide is Intermediate transcription factor 3 large subunit (VITF3L) (Camelus).